The primary structure comprises 738 residues: 1,4-alpha-glucan branching enzyme GlgB (738 aa).

Aspartate 399 serves as the catalytic Nucleophile. The Proton donor role is filled by glutamate 452.

It belongs to the glycosyl hydrolase 13 family. GlgB subfamily. Monomer.

The catalysed reaction is Transfers a segment of a (1-&gt;4)-alpha-D-glucan chain to a primary hydroxy group in a similar glucan chain.. It functions in the pathway glycan biosynthesis; glycogen biosynthesis. In terms of biological role, catalyzes the formation of the alpha-1,6-glucosidic linkages in glycogen by scission of a 1,4-alpha-linked oligosaccharide from growing alpha-1,4-glucan chains and the subsequent attachment of the oligosaccharide to the alpha-1,6 position. The sequence is that of 1,4-alpha-glucan branching enzyme GlgB from Chlamydia trachomatis serovar D (strain ATCC VR-885 / DSM 19411 / UW-3/Cx).